We begin with the raw amino-acid sequence, 1007 residues long: Exportin-7 (1007 aa).

It belongs to the exportin family.

Its subcellular location is the nucleus. It localises to the cytoplasm. It is found in the nuclear pore complex. Its function is as follows. Mediates the nuclear export of proteins (cargos) with broad substrate specificity. This is Exportin-7 (xpo7) from Dictyostelium discoideum (Social amoeba).